The chain runs to 529 residues: Glucose-6-phosphate isomerase (529 aa).

The active-site Proton donor is the Glu-322. Residues His-351 and Lys-455 contribute to the active site.

This sequence belongs to the GPI family.

Its subcellular location is the cytoplasm. The enzyme catalyses alpha-D-glucose 6-phosphate = beta-D-fructose 6-phosphate. Its pathway is carbohydrate biosynthesis; gluconeogenesis. It participates in carbohydrate degradation; glycolysis; D-glyceraldehyde 3-phosphate and glycerone phosphate from D-glucose: step 2/4. In terms of biological role, catalyzes the reversible isomerization of glucose-6-phosphate to fructose-6-phosphate. The sequence is that of Glucose-6-phosphate isomerase from Cyanothece sp. (strain PCC 7425 / ATCC 29141).